Reading from the N-terminus, the 307-residue chain is ATP-dependent (S)-NAD(P)H-hydrate dehydratase (307 aa).

The region spanning 1–291 (MDHFIKLLPK…DEIPKLVRDV (291 aa)) is the YjeF C-terminal domain. (6S)-NADPHX-binding positions include G96 and 150-156 (NIVEFSR). Residues 194–198 (KGEVD) and 214–223 (SSLRRCGGQG) contribute to the ATP site. (6S)-NADPHX is bound at residue D224.

The protein belongs to the NnrD/CARKD family. The cofactor is Mg(2+).

The enzyme catalyses (6S)-NADHX + ATP = ADP + phosphate + NADH + H(+). The catalysed reaction is (6S)-NADPHX + ATP = ADP + phosphate + NADPH + H(+). Its function is as follows. Catalyzes the dehydration of the S-form of NAD(P)HX at the expense of ATP, which is converted to ADP. Together with NAD(P)HX epimerase, which catalyzes the epimerization of the S- and R-forms, the enzyme allows the repair of both epimers of NAD(P)HX, a damaged form of NAD(P)H that is a result of enzymatic or heat-dependent hydration. The protein is ATP-dependent (S)-NAD(P)H-hydrate dehydratase of Caenorhabditis elegans.